A 41-amino-acid polypeptide reads, in one-letter code: Large ribosomal subunit protein bL36 (41 aa).

Belongs to the bacterial ribosomal protein bL36 family.

In Ruegeria pomeroyi (strain ATCC 700808 / DSM 15171 / DSS-3) (Silicibacter pomeroyi), this protein is Large ribosomal subunit protein bL36.